The sequence spans 512 residues: Putative aldehyde-dehydrogenase-like protein y4uC (512 aa).

Residues 14–41 form a disordered region; the sequence is MKPERGRRSPLPRRPTRPPDERSSGIGN. 266–271 is a binding site for NADP(+); sequence GGFATG. Active-site residues include Glu286 and Cys320.

It belongs to the aldehyde dehydrogenase family.

The protein operates within amino-acid degradation; 4-aminobutanoate degradation. Functionally, could be a succinate-semialdehyde dehydrogenase (NADP(+)). The protein is Putative aldehyde-dehydrogenase-like protein y4uC of Sinorhizobium fredii (strain NBRC 101917 / NGR234).